A 358-amino-acid polypeptide reads, in one-letter code: F-box only protein 25 (358 aa).

The interaction with beta-actin stretch occupies residues 1–83; it reads MPFLGQDWRS…NDTNTQSFYR (83 aa). The 49-residue stretch at 226–274 folds into the F-box domain; it reads LTLSDLPLHMLNNILYRFSDGWDIITLGQVTPTLYMLSEDRQLWKKLCQ.

As to quaternary structure, part of a SCF (SKP1-cullin-F-box) protein ligase complex consisting of FBXO25, SKP1, CUL1 and RBX1. Interacts directly with SKP1 and CUL1. Interacts (via C-terminus) with beta-actin (via N-terminus).

The protein localises to the nucleus. Its pathway is protein modification; protein ubiquitination. Functionally, substrate-recognition component of the SCF (SKP1-CUL1-F-box protein)-type E3 ubiquitin ligase complex. May play a role in accumulation of expanded polyglutamine (polyQ) protein huntingtin (HTT). The sequence is that of F-box only protein 25 (FBXO25) from Macaca fascicularis (Crab-eating macaque).